Here is a 493-residue protein sequence, read N- to C-terminus: GPI alpha-1,6-mannosyltransferase 2 (493 aa).

The Cytoplasmic portion of the chain corresponds to 1 to 13; that stretch reads MWPQDPSRKEVLR. Residues 14–34 traverse the membrane as a helical segment; the sequence is FAVSCRILTLMLQALFNAIIP. Residues 35–77 lie on the Lumenal side of the membrane; the sequence is DHHAEAFSPPRLAPSGFVDQLVEGLLGGLSHWDAEHFLFIAEH. A helical transmembrane segment spans residues 78-98; it reads GYLYEHNFAFFPGFPLALLVG. Residues 99–113 lie on the Cytoplasmic side of the membrane; sequence TELLRPLRGLLSLRS. Residues 114 to 134 traverse the membrane as a helical segment; sequence CLLISVASLNFLFFMLAAVAL. At 135–136 the chain is on the lumenal side; that stretch reads HD. A helical membrane pass occupies residues 137-157; sequence LGCLVLHCPHQSFYAALLFCL. The Cytoplasmic portion of the chain corresponds to 158–161; sequence SPAN. A helical transmembrane segment spans residues 162–182; that stretch reads VFLAAGYSEALFALLTFSAMG. The Lumenal segment spans residues 183–192; that stretch reads QLERGRVWTS. The helical transmembrane segment at 193 to 213 threads the bilayer; it reads VLLFAFATGVRSNGLVSVGFL. The Cytoplasmic segment spans residues 214–234; that stretch reads MHSQCQGFFSSLTMLNPLRQL. The chain crosses the membrane as a helical span at residues 235 to 255; that stretch reads FKLMASLFLSVFTLGLPFALF. Over 256 to 327 the chain is Lumenal; the sequence is QYYAYTQFCL…KYYELKQVPN (72 aa). A helical transmembrane segment spans residues 328-348; it reads FLLAAPVAILVAWATWTYVTT. The Cytoplasmic portion of the chain corresponds to 349 to 378; it reads HPWLCLTLGLQRSKNNKTLEKPDLGFLSPQ. A helical membrane pass occupies residues 379–399; sequence VFVYVVHAAVLLLFGGLCMHV. Over 400 to 469 the chain is Lumenal; the sequence is QVLTRFLGSS…HWKTCSPVTR (70 aa). Residues 470 to 490 form a helical membrane-spanning segment; it reads YILGYFLTYWLLGLLLHCNFL. The Cytoplasmic portion of the chain corresponds to 491–493; sequence PWT.

It belongs to the PIGV family. In terms of processing, not N-glycosylated.

It localises to the endoplasmic reticulum membrane. It participates in glycolipid biosynthesis; glycosylphosphatidylinositol-anchor biosynthesis. Functionally, alpha-1,6-mannosyltransferase that catalyzes the transfer of the second mannose, via an alpha-1,6 bond, from a dolichol-phosphate-mannose (Dol-P-Man) to the alpha-D-Man-(1-&gt;4)-alpha-D-GlcN-(1-&gt;6)-(1-radyl,2-acyl-sn-glycero-3-phospho)-2-acyl-inositol (also termed H2) intermediate to generate an alpha-D-Man-(1-&gt;6)-alpha-D-Man-(1-&gt;4)-alpha-D-GlcN-(1-&gt;6)-(1-radyl,2-acyl-sn-glycero-3-phospho)-2-acyl-inositol (also termed H3) and participates in the seventh step of the glycosylphosphatidylinositol-anchor biosynthesis. Also transfers the second mannose on a 2-PEtn-alpha-D-Man-(1-&gt;4)-alpha-D-GlcN-(1-&gt;6)-(1-radyl,2-acyl-sn-glycero-3-phospho)-2-acyl-inositol (also termed H5). The chain is GPI alpha-1,6-mannosyltransferase 2 from Homo sapiens (Human).